A 138-amino-acid chain; its full sequence is MQRITITLDEELLDVIDRRVATQGYQGRSEAIRDLLRAGMRESEALPDDAACVAVVSYLYDHSTRELPRRLNQTLHAHHDLTRSTLHVHLDAGHCLEVSVLQGESGRIGELSRQLMVERGVEHGQVQVIPAPGQPKVR.

Residues His-76, His-87, His-89, and Cys-95 each coordinate Ni(2+).

It belongs to the transcriptional regulatory CopG/NikR family. Ni(2+) serves as cofactor.

Its function is as follows. Transcriptional regulator. The protein is Putative nickel-responsive regulator of Pseudomonas putida (strain ATCC 47054 / DSM 6125 / CFBP 8728 / NCIMB 11950 / KT2440).